The primary structure comprises 240 residues: Proteasome subunit beta type-1 (240 aa).

The residue at position 1 (methionine 1) is an N-acetylmethionine. Positions 1 to 27 are excised as a propeptide; it reads MLSTAAYRDVERELGMGPHGSAGPVQL. O-linked (GlcNAc) serine glycosylation is present at serine 57. A phosphoserine mark is found at serine 61 and serine 67. Tyrosine 149 carries the post-translational modification Phosphotyrosine. A Phosphoserine modification is found at serine 161. Lysine 203 carries the N6-acetyllysine modification. Residue serine 208 is glycosylated (O-linked (GlcNAc) serine).

The protein belongs to the peptidase T1B family. As to quaternary structure, the 26S proteasome consists of a 20S proteasome core and two 19S regulatory subunits. The 20S proteasome core is a barrel-shaped complex made of 28 subunits that are arranged in four stacked rings. The two outer rings are each formed by seven alpha subunits, and the two inner rings are formed by seven beta subunits. The proteolytic activity is exerted by three beta-subunits PSMB5, PSMB6 and PSMB7. Interacts with SERPINB2. Interacts with RFPL4A. In terms of tissue distribution, detected in liver (at protein level).

The protein localises to the cytoplasm. The protein resides in the nucleus. Its function is as follows. Non-catalytic component of the 20S core proteasome complex involved in the proteolytic degradation of most intracellular proteins. This complex plays numerous essential roles within the cell by associating with different regulatory particles. Associated with two 19S regulatory particles, forms the 26S proteasome and thus participates in the ATP-dependent degradation of ubiquitinated proteins. The 26S proteasome plays a key role in the maintenance of protein homeostasis by removing misfolded or damaged proteins that could impair cellular functions, and by removing proteins whose functions are no longer required. Associated with the PA200 or PA28, the 20S proteasome mediates ubiquitin-independent protein degradation. This type of proteolysis is required in several pathways including spermatogenesis (20S-PA200 complex) or generation of a subset of MHC class I-presented antigenic peptides (20S-PA28 complex). The sequence is that of Proteasome subunit beta type-1 (Psmb1) from Mus musculus (Mouse).